The chain runs to 195 residues: CASP-like protein 1B2 (195 aa).

Residues 1-25 (MDLEKGKKPSEQAAACRIMQVKDKL) lie on the Cytoplasmic side of the membrane. A helical transmembrane segment spans residues 26–46 (ITLQPVVRACVFLATAVAAVI). The Extracellular portion of the chain corresponds to 47-78 (MGLNKQSYTTVVAIVGTRPVTQTFTAKFKDTP). A helical membrane pass occupies residues 79–99 (AFVFFVIANAIASGYNLMVLV). Residues 100–114 (TRRILQRRAQSLSVH) lie on the Cytoplasmic side of the membrane. A helical membrane pass occupies residues 115 to 135 (LLDMVILTLLATGSATAASMA). Residues 136 to 160 (QLGKNGNLHARWNPICDKFGSFCNH) lie on the Extracellular side of the membrane. The helical transmembrane segment at 161-181 (GGIALVSSFIGVALMLALNLL) threads the bilayer. Over 182–195 (SAAANSPRSNVTGQ) the chain is Cytoplasmic.

The protein belongs to the Casparian strip membrane proteins (CASP) family. Homodimer and heterodimers.

It localises to the cell membrane. The polypeptide is CASP-like protein 1B2 (Oryza sativa subsp. indica (Rice)).